A 675-amino-acid polypeptide reads, in one-letter code: DNA ligase (675 aa).

Residues 34 to 38 (DAEYD), 83 to 84 (SL), and Glu116 contribute to the NAD(+) site. Lys118 acts as the N6-AMP-lysine intermediate in catalysis. NAD(+) contacts are provided by Arg139, Glu176, Lys293, and Lys317. Cys411, Cys414, Cys429, and Cys435 together coordinate Zn(2+). The region spanning 594–675 (AGENPFKGKT…FLAIVNAYKR (82 aa)) is the BRCT domain.

The protein belongs to the NAD-dependent DNA ligase family. LigA subfamily. Mg(2+) serves as cofactor. Mn(2+) is required as a cofactor.

The catalysed reaction is NAD(+) + (deoxyribonucleotide)n-3'-hydroxyl + 5'-phospho-(deoxyribonucleotide)m = (deoxyribonucleotide)n+m + AMP + beta-nicotinamide D-nucleotide.. Functionally, DNA ligase that catalyzes the formation of phosphodiester linkages between 5'-phosphoryl and 3'-hydroxyl groups in double-stranded DNA using NAD as a coenzyme and as the energy source for the reaction. It is essential for DNA replication and repair of damaged DNA. In Mannheimia succiniciproducens (strain KCTC 0769BP / MBEL55E), this protein is DNA ligase.